Consider the following 159-residue polypeptide: Ribosomal RNA large subunit methyltransferase H (159 aa).

S-adenosyl-L-methionine contacts are provided by residues leucine 76, glycine 108, and 127–132 (LSKMTF).

The protein belongs to the RNA methyltransferase RlmH family. In terms of assembly, homodimer.

The protein resides in the cytoplasm. The enzyme catalyses pseudouridine(1915) in 23S rRNA + S-adenosyl-L-methionine = N(3)-methylpseudouridine(1915) in 23S rRNA + S-adenosyl-L-homocysteine + H(+). Functionally, specifically methylates the pseudouridine at position 1915 (m3Psi1915) in 23S rRNA. The chain is Ribosomal RNA large subunit methyltransferase H from Ureaplasma urealyticum serovar 10 (strain ATCC 33699 / Western).